A 737-amino-acid chain; its full sequence is Glycogen [starch] synthase, muscle (737 aa).

The residue at position 8 (Ser-8) is a Phosphoserine; by AMPK and PKA. Ser-11 is subject to Phosphoserine. Lys-39 serves as a coordination point for UDP. UDP-alpha-D-glucose-binding residues include His-205 and Arg-211. The alpha-D-glucose 6-phosphate site is built by His-291, Glu-292, Gln-294, His-297, and Lys-301. UDP is bound at residue Arg-331. Arg-331 provides a ligand contact to UDP-alpha-D-glucose. At Ser-412 the chain carries Phosphoserine. Residue His-501 participates in alpha-D-glucose 6-phosphate binding. UDP-alpha-D-glucose contacts are provided by Glu-510, Trp-512, and Gly-513. Residue Thr-515 participates in UDP binding. 2 residues coordinate alpha-D-glucose 6-phosphate: Arg-582 and Arg-586. The interval Tyr-634–Asn-737 is disordered. Position 641 is a phosphoserine; by DYRK2, GSK3-alpha, GSK3-beta and PASK (Ser-641). A phosphoserine; by GSK3-alpha and GSK3-beta mark is found at Ser-645 and Ser-649. Phosphoserine is present on Ser-652. Ser-653 bears the Phosphoserine; by GSK3-alpha and GSK3-beta mark. Ser-657 carries the phosphoserine; by CK2 modification. The segment covering Glu-658–Ala-681 has biased composition (acidic residues). Position 672 is a phosphoserine (Ser-672). Positions Ala-682–Arg-695 are enriched in basic and acidic residues. Ser-698 bears the Phosphoserine mark. Residues Ser-698–Ala-714 are compositionally biased toward polar residues. Residue Thr-700 is modified to Phosphothreonine. At Ser-710 the chain carries Phosphoserine. Residues Thr-715 to Asn-737 are compositionally biased toward low complexity. At Thr-721 the chain carries Phosphothreonine. Ser-727 and Ser-731 each carry phosphoserine.

Belongs to the glycosyltransferase 3 family. In terms of assembly, part of the GYS1-GYG1 complex, a heterooctamer composed of a tetramer of GYS1 and 2 dimers of GYG1, where each GYS1 protomer binds to one GYG1 subunit (via GYG1 C-terminus); the GYS1 tetramer may dissociate from GYG1 dimers to continue glycogen polymerization on its own. In terms of processing, phosphorylation at Ser-8 by AMPK inactivates the enzyme activity. Primed phosphorylation at Ser-657 (site 5) by CSNK2A1 and CSNK2A2 is required for inhibitory phosphorylation at Ser-641 (site 3a), Ser-645 (site 3b), Ser-649 (site 3c) and Ser-653 (site 4) by GSK3A an GSK3B. Phosphorylated at Ser-641 by PASK, leading to inactivation; phosphorylation by PASK is inhibited by glycogen. Phosphorylated at Ser-641 by DYRK2, leading to inactivation. Dephosphorylation at Ser-641 and Ser-645 by PP1 activates the enzyme.

The catalysed reaction is [(1-&gt;4)-alpha-D-glucosyl](n) + UDP-alpha-D-glucose = [(1-&gt;4)-alpha-D-glucosyl](n+1) + UDP + H(+). The protein operates within glycan biosynthesis; glycogen biosynthesis. Its activity is regulated as follows. Allosteric activation by glucose-6-phosphate. Phosphorylation reduces the activity towards UDP-glucose. When in the non-phosphorylated state, glycogen synthase does not require glucose-6-phosphate as an allosteric activator; when phosphorylated it does. In terms of biological role, glycogen synthase participates in the glycogen biosynthetic process along with glycogenin and glycogen branching enzyme. Extends the primer composed of a few glucose units formed by glycogenin by adding new glucose units to it. In this context, glycogen synthase transfers the glycosyl residue from UDP-Glc to the non-reducing end of alpha-1,4-glucan. The sequence is that of Glycogen [starch] synthase, muscle (GYS1) from Macaca mulatta (Rhesus macaque).